A 165-amino-acid chain; its full sequence is Lithostathine-1 (165 aa).

The signal sequence occupies residues M1–G21. Q22 is subject to Pyrrolidone carboxylic acid. A C-type lectin domain is found at I33 to F163. 3 cysteine pairs are disulfide-bonded: C35–C46, C63–C161, and C136–C153. N129 is a glycosylation site (N-linked (GlcNAc...) asparagine).

In terms of tissue distribution, expressed only in regenerating islets and normal exocrine pancreas, but not in normal pancreatic islets. Expressed strongly in pancreas, moderately in gall bladder, and weakly in liver.

It is found in the secreted. Functionally, might act as an inhibitor of spontaneous calcium carbonate precipitation. The sequence is that of Lithostathine-1 (Reg1) from Mus musculus (Mouse).